Reading from the N-terminus, the 103-residue chain is Pyrimidine/purine nucleoside phosphorylase (103 aa).

The protein belongs to the nucleoside phosphorylase PpnP family.

The catalysed reaction is a purine D-ribonucleoside + phosphate = a purine nucleobase + alpha-D-ribose 1-phosphate. It carries out the reaction adenosine + phosphate = alpha-D-ribose 1-phosphate + adenine. It catalyses the reaction cytidine + phosphate = cytosine + alpha-D-ribose 1-phosphate. The enzyme catalyses guanosine + phosphate = alpha-D-ribose 1-phosphate + guanine. The catalysed reaction is inosine + phosphate = alpha-D-ribose 1-phosphate + hypoxanthine. It carries out the reaction thymidine + phosphate = 2-deoxy-alpha-D-ribose 1-phosphate + thymine. It catalyses the reaction uridine + phosphate = alpha-D-ribose 1-phosphate + uracil. The enzyme catalyses xanthosine + phosphate = alpha-D-ribose 1-phosphate + xanthine. Its function is as follows. Catalyzes the phosphorolysis of diverse nucleosides, yielding D-ribose 1-phosphate and the respective free bases. Can use uridine, adenosine, guanosine, cytidine, thymidine, inosine and xanthosine as substrates. Also catalyzes the reverse reactions. The sequence is that of Pyrimidine/purine nucleoside phosphorylase from Shewanella sp. (strain ANA-3).